The chain runs to 472 residues: Adenosylhomocysteinase (472 aa).

Substrate is bound by residues Thr-63, Asp-138, and Glu-198. Residue 199–201 participates in NAD(+) binding; that stretch reads TTT. The substrate site is built by Lys-228 and Asp-232. Residues Asn-233, 262 to 267, Glu-285, Asn-320, 341 to 343, and Asn-386 contribute to the NAD(+) site; these read GYGDVG and IGH.

It belongs to the adenosylhomocysteinase family. The cofactor is NAD(+).

Its subcellular location is the cytoplasm. The enzyme catalyses S-adenosyl-L-homocysteine + H2O = L-homocysteine + adenosine. Its pathway is amino-acid biosynthesis; L-homocysteine biosynthesis; L-homocysteine from S-adenosyl-L-homocysteine: step 1/1. Its function is as follows. May play a key role in the regulation of the intracellular concentration of adenosylhomocysteine. The sequence is that of Adenosylhomocysteinase from Methylococcus capsulatus (strain ATCC 33009 / NCIMB 11132 / Bath).